We begin with the raw amino-acid sequence, 91 residues long: Probable Fe(2+)-trafficking protein (91 aa).

Belongs to the Fe(2+)-trafficking protein family. In terms of assembly, monomer.

In terms of biological role, could be a mediator in iron transactions between iron acquisition and iron-requiring processes, such as synthesis and/or repair of Fe-S clusters in biosynthetic enzymes. This chain is Probable Fe(2+)-trafficking protein, found in Citrobacter koseri (strain ATCC BAA-895 / CDC 4225-83 / SGSC4696).